The primary structure comprises 793 residues: Probable phosphoketolase (793 aa).

It belongs to the XFP family. Thiamine diphosphate is required as a cofactor.

The sequence is that of Probable phosphoketolase from Rhodopirellula baltica (strain DSM 10527 / NCIMB 13988 / SH1).